A 314-amino-acid chain; its full sequence is 4-hydroxy-3-methylbut-2-enyl diphosphate reductase (314 aa).

Cys12 contributes to the [4Fe-4S] cluster binding site. The (2E)-4-hydroxy-3-methylbut-2-enyl diphosphate site is built by His41 and His74. 2 residues coordinate dimethylallyl diphosphate: His41 and His74. Isopentenyl diphosphate-binding residues include His41 and His74. A [4Fe-4S] cluster-binding site is contributed by Cys96. His124 contacts (2E)-4-hydroxy-3-methylbut-2-enyl diphosphate. His124 contacts dimethylallyl diphosphate. Residue His124 participates in isopentenyl diphosphate binding. Glu126 acts as the Proton donor in catalysis. Position 167 (Thr167) interacts with (2E)-4-hydroxy-3-methylbut-2-enyl diphosphate. Position 197 (Cys197) interacts with [4Fe-4S] cluster. Ser225, Ser226, Asn227, and Ser269 together coordinate (2E)-4-hydroxy-3-methylbut-2-enyl diphosphate. 4 residues coordinate dimethylallyl diphosphate: Ser225, Ser226, Asn227, and Ser269. Residues Ser225, Ser226, Asn227, and Ser269 each coordinate isopentenyl diphosphate.

This sequence belongs to the IspH family. [4Fe-4S] cluster serves as cofactor.

It catalyses the reaction isopentenyl diphosphate + 2 oxidized [2Fe-2S]-[ferredoxin] + H2O = (2E)-4-hydroxy-3-methylbut-2-enyl diphosphate + 2 reduced [2Fe-2S]-[ferredoxin] + 2 H(+). The enzyme catalyses dimethylallyl diphosphate + 2 oxidized [2Fe-2S]-[ferredoxin] + H2O = (2E)-4-hydroxy-3-methylbut-2-enyl diphosphate + 2 reduced [2Fe-2S]-[ferredoxin] + 2 H(+). It functions in the pathway isoprenoid biosynthesis; dimethylallyl diphosphate biosynthesis; dimethylallyl diphosphate from (2E)-4-hydroxy-3-methylbutenyl diphosphate: step 1/1. The protein operates within isoprenoid biosynthesis; isopentenyl diphosphate biosynthesis via DXP pathway; isopentenyl diphosphate from 1-deoxy-D-xylulose 5-phosphate: step 6/6. Catalyzes the conversion of 1-hydroxy-2-methyl-2-(E)-butenyl 4-diphosphate (HMBPP) into a mixture of isopentenyl diphosphate (IPP) and dimethylallyl diphosphate (DMAPP). Acts in the terminal step of the DOXP/MEP pathway for isoprenoid precursor biosynthesis. This Haemophilus influenzae (strain PittGG) protein is 4-hydroxy-3-methylbut-2-enyl diphosphate reductase.